Here is a 67-residue protein sequence, read N- to C-terminus: Large ribosomal subunit protein bL32 (67 aa).

Over residues methionine 1–glutamine 19 the composition is skewed to basic residues. The interval methionine 1–alanine 22 is disordered.

This sequence belongs to the bacterial ribosomal protein bL32 family.

This chain is Large ribosomal subunit protein bL32, found in Kineococcus radiotolerans (strain ATCC BAA-149 / DSM 14245 / SRS30216).